The primary structure comprises 454 residues: Bleomycin hydrolase (454 aa).

An N-acetylmethionine modification is found at Met-1. Residues Cys-73 and His-372 contribute to the active site. Residue Lys-391 is modified to N6-acetyllysine. The active site involves Asn-396.

The protein belongs to the peptidase C1 family. Homohexamer. Interacts with NUDT12 (via ANK repeats). In terms of tissue distribution, expressed at relatively higher levels in the stomach, esophagus, spleen, thymus and testis, and at lower levels in the skin, lung and skeletal muscle.

The protein localises to the cytoplasm. Its subcellular location is the cytoplasmic granule. The enzyme catalyses Inactivates bleomycin B2 (a cytotoxic glycometallopeptide) by hydrolysis of a carboxyamide bond of beta-aminoalanine, but also shows general aminopeptidase activity. The specificity varies somewhat with source, but amino acid arylamides of Met, Leu and Ala are preferred.. The normal physiological role of BLM hydrolase is unknown, but it catalyzes the inactivation of the antitumor drug BLM (a glycopeptide) by hydrolyzing the carboxamide bond of its B-aminoalaninamide moiety thus protecting normal and malignant cells from BLM toxicity. Binds single-stranded DNA with higher affinity than double-stranded DNA. May play an important role in the metabolism of antibiotics. This Rattus norvegicus (Rat) protein is Bleomycin hydrolase (Blmh).